Here is a 400-residue protein sequence, read N- to C-terminus: WW domain-containing transcription regulator protein 1 (400 aa).

Lysine 46 is covalently cross-linked (Glycyl lysine isopeptide (Lys-Gly) (interchain with G-Cter in ubiquitin)). A disordered region spans residues 52–117 (FFKEPDSGSH…QQHAHLRQQS (66 aa)). The segment covering 61 to 70 (HSRQSSTDSS) has biased composition (polar residues). A phosphoserine mark is found at serine 62 and serine 89. Low complexity predominate over residues 91–110 (PASLQLGPGAGAAGSPAQQH). The WW domain occupies 124–157 (LPLPPGWEMTFTATGQRYFLNHIEKITTWQDPRK). Residues 192-211 (NHQHQQQMAPTNLSQQNHPT) show a composition bias toward polar residues. A disordered region spans residues 192 to 216 (NHQHQQQMAPTNLSQQNHPTQNPPA). Residues 222–400 (PNALTTQQQQ…NKSEPFLTWL (179 aa)) form a required for interaction with PALS1 region. Phosphoserine is present on residues serine 295 and serine 311. A PDZ-binding motif is present at residues 394–400 (EPFLTWL).

Binds to SLC9A3R2 via the PDZ motif at the plasma membrane. Binds to YWHAZ in vivo and in vitro through the phosphoserine-binding motif RSHSSP. Interacts (via coiled-coil domain) with SMAD2 (via MH1 domain), SMAD3 and SMAD4. Interacts with MED15. Interacts with PAX8 and NKX2-1. Interacts with TEAD1, TEAD2, TEAD3 and TEAD4. Interacts (via WW domain) with PALS1. Interacts with LATS1. Interacts with YAP1 (when phosphorylated at 'Ser-112'). Interacts (via WW domain) with PRRG4 (via cytoplasmic domain). Interacts (via WW domain) with AMOTL2 (via PPXY motif); the interaction promotes WWTR1/TAZ localization to the cytoplasm and tight junctions, thereby inhibiting its transcriptional coactivator properties. Interacts (via WW domain) with AMOT; the interaction facilitates translocation of WWTR1/TAZ to the cytoplasm. In terms of processing, phosphorylated by LATS2 and STK3/MST2. Phosphorylation by LATS2 results in creation of 14-3-3 binding sites, retention in the cytoplasm, and functional inactivation. Phosphorylation results in the inhibition of transcriptional coactivation through YWHAZ-mediated nuclear export. Post-translationally, ubiquitinated at Lys-46; leading to proteasomal degradation. Deubiquitinated and stabilized by UCHL1 at Lys-46; leading to inhibition of osteoclastogenesis.

It localises to the cytoplasm. It is found in the nucleus. Its subcellular location is the cell membrane. The protein resides in the cell junction. The protein localises to the tight junction. Its function is as follows. Transcriptional coactivator which acts as a downstream regulatory target in the Hippo signaling pathway that plays a pivotal role in organ size control and tumor suppression by restricting proliferation and promoting apoptosis. The core of this pathway is composed of a kinase cascade wherein STK3/MST2 and STK4/MST1, in complex with its regulatory protein SAV1, phosphorylates and activates LATS1/2 in complex with its regulatory protein MOB1, which in turn phosphorylates and inactivates YAP1 oncoprotein and WWTR1/TAZ. WWTR1 enhances PAX8 and NKX2-1/TTF1-dependent gene activation. In conjunction with YAP1, involved in the regulation of TGFB1-dependent SMAD2 and SMAD3 nuclear accumulation. Plays a key role in coupling SMADs to the transcriptional machinery such as the mediator complex. Regulates embryonic stem-cell self-renewal, promotes cell proliferation and epithelial-mesenchymal transition. The polypeptide is WW domain-containing transcription regulator protein 1 (Canis lupus familiaris (Dog)).